The primary structure comprises 288 residues: 4-diphosphocytidyl-2-C-methyl-D-erythritol kinase (288 aa).

K13 is an active-site residue. 96-106 (PMGGGIGGGSS) contributes to the ATP binding site. The active site involves D138.

It belongs to the GHMP kinase family. IspE subfamily.

The catalysed reaction is 4-CDP-2-C-methyl-D-erythritol + ATP = 4-CDP-2-C-methyl-D-erythritol 2-phosphate + ADP + H(+). It participates in isoprenoid biosynthesis; isopentenyl diphosphate biosynthesis via DXP pathway; isopentenyl diphosphate from 1-deoxy-D-xylulose 5-phosphate: step 3/6. Catalyzes the phosphorylation of the position 2 hydroxy group of 4-diphosphocytidyl-2C-methyl-D-erythritol. The sequence is that of 4-diphosphocytidyl-2-C-methyl-D-erythritol kinase from Aliivibrio fischeri (strain MJ11) (Vibrio fischeri).